The following is a 209-amino-acid chain: Uracil phosphoribosyltransferase (209 aa).

Residues Arg-79, Arg-104, and 131–139 (DPMLATANS) contribute to the 5-phospho-alpha-D-ribose 1-diphosphate site. Residues Ile-194 and 199–201 (GDA) each bind uracil. Residue Asp-200 participates in 5-phospho-alpha-D-ribose 1-diphosphate binding.

This sequence belongs to the UPRTase family. Mg(2+) serves as cofactor.

It carries out the reaction UMP + diphosphate = 5-phospho-alpha-D-ribose 1-diphosphate + uracil. Its pathway is pyrimidine metabolism; UMP biosynthesis via salvage pathway; UMP from uracil: step 1/1. With respect to regulation, allosterically activated by GTP. Its function is as follows. Catalyzes the conversion of uracil and 5-phospho-alpha-D-ribose 1-diphosphate (PRPP) to UMP and diphosphate. The chain is Uracil phosphoribosyltransferase from Mesorhizobium japonicum (strain LMG 29417 / CECT 9101 / MAFF 303099) (Mesorhizobium loti (strain MAFF 303099)).